The chain runs to 358 residues: Uroporphyrinogen decarboxylase (358 aa).

Substrate contacts are provided by residues 29 to 33 (RQAGR), Phe48, Asp79, Tyr155, Ser210, and His330.

Belongs to the uroporphyrinogen decarboxylase family. In terms of assembly, homodimer.

The protein resides in the cytoplasm. The catalysed reaction is uroporphyrinogen III + 4 H(+) = coproporphyrinogen III + 4 CO2. Its pathway is porphyrin-containing compound metabolism; protoporphyrin-IX biosynthesis; coproporphyrinogen-III from 5-aminolevulinate: step 4/4. Catalyzes the decarboxylation of four acetate groups of uroporphyrinogen-III to yield coproporphyrinogen-III. This is Uroporphyrinogen decarboxylase from Bordetella parapertussis (strain 12822 / ATCC BAA-587 / NCTC 13253).